Consider the following 87-residue polypeptide: Small ribosomal subunit protein bS20 (87 aa).

Belongs to the bacterial ribosomal protein bS20 family.

Functionally, binds directly to 16S ribosomal RNA. The sequence is that of Small ribosomal subunit protein bS20 from Rhizorhabdus wittichii (strain DSM 6014 / CCUG 31198 / JCM 15750 / NBRC 105917 / EY 4224 / RW1) (Sphingomonas wittichii).